Reading from the N-terminus, the 282-residue chain is Plant cysteine oxidase 3 (282 aa).

Residues His-131, His-133, and His-202 each contribute to the Fe cation site.

Belongs to the cysteine dioxygenase family. The cofactor is Fe(2+).

Its subcellular location is the nucleus. The protein resides in the cytoplasm. It carries out the reaction L-cysteine + O2 = 3-sulfino-L-alanine + H(+). Functionally, catalyzes the oxidation of N-terminal cysteine residues (N-Cys), thus preparing the protein for N-end rule pathway-mediated proteasomal degradation, upstream of the N-end rule enzymes ATE1, ATE2 and PRT6. Controls the preparation of the group VII ethylene response factor (ERF-VII) proteins for degradation via the 26S proteasome N-end rule pathway. Acts as an oxygen sensor that controls the stability of ERF-VII proteins, which are stabilized in flooding-induced hypoxia, and regulate transcriptional adaptation to these adverse conditions. This Arabidopsis thaliana (Mouse-ear cress) protein is Plant cysteine oxidase 3.